A 715-amino-acid polypeptide reads, in one-letter code: Palmitoyltransferase ZDHHC5 (715 aa).

At 1–13 the chain is on the cytoplasmic side; the sequence is MPAESGKRFKPSK. A helical transmembrane segment spans residues 14–34; it reads YVPVSAAAIFLVGATTLFFAF. The Extracellular portion of the chain corresponds to 35–52; the sequence is TCPGLSLDVSPAVPIYNA. The chain crosses the membrane as a helical span at residues 53-73; the sequence is IMFLFVLANFSMATFMDPGIF. Over 74–148 the chain is Cytoplasmic; sequence PRAEEDEDKE…NCIGRRNYRY (75 aa). A Phosphotyrosine modification is found at tyrosine 91. In terms of domain architecture, DHHC spans 104-154; it reads KWCATCRFYRPPRCSHCSVCDNCVEEFDHHCPWVNNCIGRRNYRYFFLFLL. The S-palmitoyl cysteine intermediate role is filled by cysteine 134. Residues 149 to 169 traverse the membrane as a helical segment; sequence FFLFLLSLTAHIMGVFGFGLL. Topologically, residues 170-191 are extracellular; that stretch reads YVLCHIEELSGVRTAVTMAVMC. A helical transmembrane segment spans residues 192 to 212; the sequence is VAGLFFIPVAGLTGFHVVLVA. Residues 213–715 are Cytoplasmic-facing; it reads RGRTTNEQVT…VGGTTYEISV (503 aa). Position 247 is a phosphoserine (serine 247). Positions 289–715 are disordered; the sequence is GELRRTKSKG…VGGTTYEISV (427 aa). The residue at position 294 (threonine 294) is a Phosphothreonine. 2 positions are modified to phosphoserine: serine 296 and serine 299. Phosphothreonine is present on threonine 303. Position 345 is a phosphoserine (serine 345). Phosphothreonine occurs at positions 348 and 350. Positions 359-373 are enriched in low complexity; it reads SSSSTSAAMPHSSSA. Phosphoserine is present on residues serine 380, serine 398, serine 406, and serine 409. Threonine 411 is subject to Phosphothreonine. 4 positions are modified to phosphoserine: serine 415, serine 425, serine 429, and serine 432. Positions 422-432 are enriched in low complexity; that stretch reads SSGSRSSSLKS. The residue at position 436 (threonine 436) is a Phosphothreonine. Residues 442–478 are compositionally biased toward polar residues; sequence QLQSIRSEGTTSTSYKSLANQTRNGSLSYDSLLTPSD. Phosphoserine occurs at positions 529 and 554. The segment covering 581-597 has biased composition (low complexity); sequence PRTSSSSDDSKRSPLSK. The residue at position 617 (arginine 617) is an Omega-N-methylarginine. Phosphoserine is present on serine 621. Threonine 659 is subject to Phosphothreonine. Residues 666–677 are compositionally biased toward polar residues; that stretch reads LKTTYSKSNGQP. Phosphoserine is present on residues serine 684 and serine 694. Arginine 697 carries the post-translational modification Omega-N-methylarginine.

Belongs to the DHHC palmitoyltransferase family. ERF2/ZDHHC9 subfamily. In terms of processing, autopalmitoylated. Palmitoylation of the C-terminal tail regulates stimulation-dependent plasma membrane motility. Post-translationally, phosphorylation regulates association with endocytic proteins and its subcellular localization. Phosphorylation by LYN during fatty acid uptake leads to inactivation of the activity.

It localises to the cell membrane. The enzyme catalyses L-cysteinyl-[protein] + hexadecanoyl-CoA = S-hexadecanoyl-L-cysteinyl-[protein] + CoA. Palmitoyltransferase that catalyzes the addition of palmitate onto various protein substrates such as CTNND2, CD36, GSDMD, NLRP3, NOD1, NOD2, STAT3 and S1PR1 thus plays a role in various biological processes including cell adhesion, inflammation, fatty acid uptake, bacterial sensing or cardiac functions. Plays an important role in the regulation of synapse efficacy by mediating palmitoylation of delta-catenin/CTNND2, thereby increasing synaptic delivery and surface stabilization of alpha-amino-3-hydroxy-5-methyl-4-isoxazole propionic acid receptors (AMPARs). Under basal conditions, remains at the synaptic membrane through FYN-mediated phosphorylation that prevents association with endocytic proteins. Neuronal activity enhances the internalization and trafficking of DHHC5 from spines to dendritic shafts where it palmitoylates delta-catenin/CTNND2. Regulates cell adhesion at the plasma membrane by palmitoylating GOLGA7B and DSG2. Plays a role in innate immune response by mediating the palmitoylation of NOD1 and NOD2 and their proper recruitment to the bacterial entry site and phagosomes. Also participates in fatty acid uptake by palmitoylating CD36 and thereby targeting it to the plasma membrane. Upon binding of fatty acids to CD36, gets phosphorylated by LYN leading to inactivation and subsequent CD36 caveolar endocytosis. Controls oligodendrocyte development by catalyzing STAT3 palmitoylation. Acts as a regulator of inflammatory response by mediating palmitoylation of NLRP3 and GSDMD. Palmitoylates NLRP3 to promote inflammasome assembly and activation. Activates pyroptosis by catalyzing palmitoylation of gasdermin-D (GSDMD), thereby promoting membrane translocation and pore formation of GSDMD. In Rattus norvegicus (Rat), this protein is Palmitoyltransferase ZDHHC5 (Zdhhc5).